Consider the following 554-residue polypeptide: Urocanate hydratase (554 aa).

Residues 51 to 52, Gln129, 175 to 177, Glu195, Arg200, 241 to 242, 262 to 266, 272 to 273, and Tyr321 each bind NAD(+); these read GG, GMG, NA, QTSAH, and YL. Residue Cys409 is part of the active site. NAD(+) is bound at residue Gly491.

This sequence belongs to the urocanase family. Requires NAD(+) as cofactor.

The protein localises to the cytoplasm. It catalyses the reaction 4-imidazolone-5-propanoate = trans-urocanate + H2O. The protein operates within amino-acid degradation; L-histidine degradation into L-glutamate; N-formimidoyl-L-glutamate from L-histidine: step 2/3. Its function is as follows. Catalyzes the conversion of urocanate to 4-imidazolone-5-propionate. The chain is Urocanate hydratase from Caulobacter sp. (strain K31).